We begin with the raw amino-acid sequence, 141 residues long: Nucleoside diphosphate kinase (141 aa).

Positions 11, 59, 87, 93, 104, and 114 each coordinate ATP. Residue histidine 117 is the Pros-phosphohistidine intermediate of the active site.

The protein belongs to the NDK family. In terms of assembly, homotetramer. The cofactor is Mg(2+).

It is found in the cytoplasm. It catalyses the reaction a 2'-deoxyribonucleoside 5'-diphosphate + ATP = a 2'-deoxyribonucleoside 5'-triphosphate + ADP. It carries out the reaction a ribonucleoside 5'-diphosphate + ATP = a ribonucleoside 5'-triphosphate + ADP. Its function is as follows. Major role in the synthesis of nucleoside triphosphates other than ATP. The ATP gamma phosphate is transferred to the NDP beta phosphate via a ping-pong mechanism, using a phosphorylated active-site intermediate. The chain is Nucleoside diphosphate kinase from Cupriavidus taiwanensis (strain DSM 17343 / BCRC 17206 / CCUG 44338 / CIP 107171 / LMG 19424 / R1) (Ralstonia taiwanensis (strain LMG 19424)).